The chain runs to 937 residues: MSDYKNTLNLPETGFPMRGDLAKREPNMLKRWYKDELYQVIRKAKAGKKTFILHDGPPYANGSIHIGHSVNKILKDIIIKSKGMAGYDSPYIPGWDCHGLPIELKVEQIIGKPGEKFSAAEFRAECRKYAKEQIEGQKKDFIRLGILGDWERPYLTMDFKTEADIIRALSRIIANGHLLKGAKPVHWCTDCRSSLAEAEVEYYDKTSPSIDVRFNAVDAVAVCEKFGVQAPEQPVSLVIWTTTPWTLPANRAIALHAEFNYQLVQIEGECLILAADLVESVMQRAGITSWTVLGHCAGSALELLRFKHPFMGFDSPVVLGDHVTLDAGTGAVHTAPGHGPDDFVLGQKYGLEVANPVGPNGCYLPGTYPSLDGMFVFKANDVVLNILSENNALLHLEKLQHSYPCCWRHKTPIIFRATPQWFVSMDQNGLRKQSLQEIKGVQWIPGWGQARIEAMVENRPDWCISRQRTWGTPMSLFVHKETEELHPRTIELMEEVAKRVEVDGIQAWWDLEPAELLGDDAANYVKIFDTLDVWFDSGSTHASVVDARPEFQGNAADIYLEGSDQHRGWFMSSLMISTAIKGKAPYRQVLTHGFTVDGQGRKMSKSIGNTISPQDVMDKLGADILRLWVASTDYTGEIAVSDEILKRSADAYRRIRNTARFLLANLNGFDPEQHSVKPEEMAVLDRWAVGCAQAAQADIAKCYDKYDFHTVVQRMMQFCSVEMGSFYLDIIKDRQYTAKSDSLARRSCQTALYHIAEALVRWMAPILSFTADEVWNELPGKRAQYVFTEEWYGGLFGLAAGELMNDAFWADLLAVRGEVNKVLEQARADKHIRSSLEAAVTLYADNELADKLNSLGDELRFVLLTSQVVVADYEQAGEDAQQSEIGSLKIAFRKADGEKCPRCWHYAKDVGLVAEHAELCGRCVTNVAGNGEERKFA.

The short motif at 58–68 (PYANGSIHIGH) is the 'HIGH' region element. Residue Glu561 coordinates L-isoleucyl-5'-AMP. The 'KMSKS' region motif lies at 602-606 (KMSKS). Lys605 is an ATP binding site. Zn(2+) contacts are provided by Cys900, Cys903, Cys920, and Cys923.

Belongs to the class-I aminoacyl-tRNA synthetase family. IleS type 1 subfamily. Monomer. It depends on Zn(2+) as a cofactor.

The protein resides in the cytoplasm. The enzyme catalyses tRNA(Ile) + L-isoleucine + ATP = L-isoleucyl-tRNA(Ile) + AMP + diphosphate. Catalyzes the attachment of isoleucine to tRNA(Ile). As IleRS can inadvertently accommodate and process structurally similar amino acids such as valine, to avoid such errors it has two additional distinct tRNA(Ile)-dependent editing activities. One activity is designated as 'pretransfer' editing and involves the hydrolysis of activated Val-AMP. The other activity is designated 'posttransfer' editing and involves deacylation of mischarged Val-tRNA(Ile). In Photorhabdus laumondii subsp. laumondii (strain DSM 15139 / CIP 105565 / TT01) (Photorhabdus luminescens subsp. laumondii), this protein is Isoleucine--tRNA ligase.